Here is a 437-residue protein sequence, read N- to C-terminus: Kynureninase (437 aa).

Pyridoxal 5'-phosphate-binding positions include L99, T100, 127-130, S183, D212, H215, and Y237; that span reads FPSD. The residue at position 238 (K238) is an N6-(pyridoxal phosphate)lysine. W267 and N295 together coordinate pyridoxal 5'-phosphate.

Belongs to the kynureninase family. In terms of assembly, homodimer. The cofactor is pyridoxal 5'-phosphate.

It is found in the cytoplasm. The catalysed reaction is L-kynurenine + H2O = anthranilate + L-alanine + H(+). It carries out the reaction 3-hydroxy-L-kynurenine + H2O = 3-hydroxyanthranilate + L-alanine + H(+). It participates in amino-acid degradation; L-kynurenine degradation; L-alanine and anthranilate from L-kynurenine: step 1/1. Its pathway is cofactor biosynthesis; NAD(+) biosynthesis; quinolinate from L-kynurenine: step 2/3. Its function is as follows. Catalyzes the cleavage of L-kynurenine (L-Kyn) and L-3-hydroxykynurenine (L-3OHKyn) into anthranilic acid (AA) and 3-hydroxyanthranilic acid (3-OHAA), respectively. The protein is Kynureninase of Yarrowia lipolytica (strain CLIB 122 / E 150) (Yeast).